A 352-amino-acid chain; its full sequence is Peptide chain release factor 1 (352 aa).

Q233 is subject to N5-methylglutamine. Residues 288 to 309 (NAKDRKEQVGSGDRSERIRTYN) form a disordered region. Over residues 289–306 (AKDRKEQVGSGDRSERIR) the composition is skewed to basic and acidic residues.

Belongs to the prokaryotic/mitochondrial release factor family. Methylated by PrmC. Methylation increases the termination efficiency of RF1.

It is found in the cytoplasm. Its function is as follows. Peptide chain release factor 1 directs the termination of translation in response to the peptide chain termination codons UAG and UAA. This chain is Peptide chain release factor 1, found in Helicobacter acinonychis (strain Sheeba).